A 222-amino-acid polypeptide reads, in one-letter code: ATP synthase F(0) complex subunit a (222 aa).

The next 6 helical transmembrane spans lie at Phe-8–Pro-28, Trp-64–Leu-84, Gln-93–Phe-113, Gln-127–Ile-147, Ile-160–Ile-180, and Ile-197–His-219.

This sequence belongs to the ATPase A chain family. Component of the ATP synthase complex composed at least of ATP5F1A/subunit alpha, ATP5F1B/subunit beta, ATP5MC1/subunit c (homooctomer), MT-ATP6/subunit a, MT-ATP8/subunit 8, ATP5ME/subunit e, ATP5MF/subunit f, ATP5MG/subunit g, ATP5MK/subunit k, ATP5MJ/subunit j, ATP5F1C/subunit gamma, ATP5F1D/subunit delta, ATP5F1E/subunit epsilon, ATP5PF/subunit F6, ATP5PB/subunit b, ATP5PD/subunit d, ATP5PO/subunit OSCP. ATP synthase complex consists of a soluble F(1) head domain (subunits alpha(3) and beta(3)) - the catalytic core - and a membrane F(0) domain - the membrane proton channel (subunits c, a, 8, e, f, g, k and j). These two domains are linked by a central stalk (subunits gamma, delta, and epsilon) rotating inside the F1 region and a stationary peripheral stalk (subunits F6, b, d, and OSCP). Interacts with DNAJC30; interaction is direct.

The protein resides in the mitochondrion inner membrane. The catalysed reaction is H(+)(in) = H(+)(out). Functionally, subunit a, of the mitochondrial membrane ATP synthase complex (F(1)F(0) ATP synthase or Complex V) that produces ATP from ADP in the presence of a proton gradient across the membrane which is generated by electron transport complexes of the respiratory chain. ATP synthase complex consist of a soluble F(1) head domain - the catalytic core - and a membrane F(1) domain - the membrane proton channel. These two domains are linked by a central stalk rotating inside the F(1) region and a stationary peripheral stalk. During catalysis, ATP synthesis in the catalytic domain of F(1) is coupled via a rotary mechanism of the central stalk subunits to proton translocation. With the subunit c (ATP5MC1), forms the proton-conducting channel in the F(0) domain, that contains two crucial half-channels (inlet and outlet) that facilitate proton movement from the mitochondrial intermembrane space (IMS) into the matrix. Protons are taken up via the inlet half-channel and released through the outlet half-channel, following a Grotthuss mechanism. The sequence is that of ATP synthase F(0) complex subunit a from Loxodonta africana (African elephant).